A 518-amino-acid polypeptide reads, in one-letter code: Two-component response regulator-like PRR1 (518 aa).

Positions 29 to 147 constitute a Response regulatory domain; that stretch reads RILLCDSDPS…ELLNLWTHVW (119 aa). 3 disordered regions span residues 172–241, 266–305, and 483–518; these read PSDA…PGVM, TPTTSSFDSELQKGGNRLDSSDHRGNFSSTTDRSDTGTDV, and VRQANYTDITSTGDDISEDEDDDPSSREVEMVSSPE. Positions 196–212 are enriched in polar residues; the sequence is NQETSTSNQHEYESNPS. The CCT domain occupies 443 to 485; sequence RAAALAKFRLKRKERCFDKKVRYVNRKKLAETRPRVRGQFVRQ.

It belongs to the ARR-like family. In terms of assembly, interacts with PIL13. Interacts with PIL15.

The protein resides in the nucleus. Functionally, controls photoperiodic flowering response. Seems to be one of the component of the circadian clock. Expression of several members of the ARR-like family is controlled by circadian rhythm. The particular coordinated sequential expression of PRR73, PRR37, PRR95, PRR59 and PPR1 result to circadian waves that may be at the basis of the endogenous circadian clock. This Oryza sativa subsp. japonica (Rice) protein is Two-component response regulator-like PRR1 (PRR1).